Reading from the N-terminus, the 301-residue chain is uncharacterized protein (301 aa).

Belongs to the asfivirus E301R family. In terms of assembly, interacts with host IRF3.

Plays a role in the inhibition of host innate immune system by acting as a negatively regulator of type I interferon production. Mechanistically, interacts with and prevents host IRF3 nuclear localization to inhibit its transcriptional activity. This is an uncharacterized protein from African swine fever virus (strain Badajoz 1971 Vero-adapted) (Ba71V).